A 505-amino-acid chain; its full sequence is MVSIRPDEISSIIRQQIEQYSQDVKVENVGTVLQVGDGIARIYGLQQVMSGELVEFEDGTTGIALNLEEDNVGAVLMGEGRNIQEGSTVKATGKIAQIPVGDALVGRVVSPLGAPLDGKGEIAATENRLIESPAPGIIARRSVHEPMQTGITAIDAMIPIGRGQRELIIGDRQTGKTAIAIDTILNQKGEDVICVYVAIGQKASSVANIIEVLRERGALDYTVVVAANASEPATLQYLAPYAGAAIAEYFMYKGKATLVIYDDLTKQAQAYRQMSLLLRRPPGREAYPGDVFYLHSRLLERAAKLSDALGGGSMTALPVIETQAGDVSAYIPTNVISITDGQIFLSSDLFNSGLRPAINVGISVSRVGSAAQTKAIKKIAGTLKLELAQFDELAAFAQFASDLDKATQNQLARGQRLRELLKQPQFSPLILAEQVAVVYAGVKGLIDEIPVNQVTAFVSELRSYLKTSKPEFIEKVQSSKQLDDAAEALLKEAIAEVKKNILAAV.

An ATP-binding site is contributed by 170–177 (GDRQTGKT).

The protein belongs to the ATPase alpha/beta chains family. As to quaternary structure, F-type ATPases have 2 components, CF(1) - the catalytic core - and CF(0) - the membrane proton channel. CF(1) has five subunits: alpha(3), beta(3), gamma(1), delta(1), epsilon(1). CF(0) has four main subunits: a(1), b(1), b'(1) and c(9-12).

It localises to the cellular thylakoid membrane. It carries out the reaction ATP + H2O + 4 H(+)(in) = ADP + phosphate + 5 H(+)(out). Functionally, produces ATP from ADP in the presence of a proton gradient across the membrane. The alpha chain is a regulatory subunit. This is ATP synthase subunit alpha from Synechococcus sp. (strain ATCC 27144 / PCC 6301 / SAUG 1402/1) (Anacystis nidulans).